The sequence spans 632 residues: Thioredoxin domain-containing protein C959.05c (632 aa).

Residues 1–22 form the signal peptide; sequence MKLFLYHFTFIVYYFIISFSYA. N-linked (GlcNAc...) asparagine glycosylation is found at Asn-35, Asn-41, and Asn-140. The Thioredoxin domain occupies 153 to 284; that stretch reads SDSSSTDPAF…LLSYSNQVAS (132 aa). A disulfide bond links Cys-209 and Cys-212. The N-linked (GlcNAc...) asparagine glycan is linked to Asn-557. A helical membrane pass occupies residues 583–603; sequence LIVFNLLIALLILSILTIISA.

It belongs to the protein disulfide isomerase family.

Its subcellular location is the endoplasmic reticulum membrane. The enzyme catalyses Catalyzes the rearrangement of -S-S- bonds in proteins.. In terms of biological role, acts as a membrane-bound chaperone in endoplasmic reticulum quality control. Probably facilitates presentation of substrate to membrane-bound components of the degradation machinery. The chain is Thioredoxin domain-containing protein C959.05c from Schizosaccharomyces pombe (strain 972 / ATCC 24843) (Fission yeast).